Reading from the N-terminus, the 239-residue chain is Pyridoxine 5'-phosphate synthase (239 aa).

N7 contacts 3-amino-2-oxopropyl phosphate. 9–10 (DH) contributes to the 1-deoxy-D-xylulose 5-phosphate binding site. R18 serves as a coordination point for 3-amino-2-oxopropyl phosphate. Catalysis depends on H43, which acts as the Proton acceptor. 1-deoxy-D-xylulose 5-phosphate is bound by residues R45 and H50. Catalysis depends on E70, which acts as the Proton acceptor. T100 is a binding site for 1-deoxy-D-xylulose 5-phosphate. Residue H191 is the Proton donor of the active site. 3-amino-2-oxopropyl phosphate contacts are provided by residues G192 and 213-214 (GH).

This sequence belongs to the PNP synthase family. In terms of assembly, homooctamer; tetramer of dimers.

The protein localises to the cytoplasm. The enzyme catalyses 3-amino-2-oxopropyl phosphate + 1-deoxy-D-xylulose 5-phosphate = pyridoxine 5'-phosphate + phosphate + 2 H2O + H(+). It participates in cofactor biosynthesis; pyridoxine 5'-phosphate biosynthesis; pyridoxine 5'-phosphate from D-erythrose 4-phosphate: step 5/5. Functionally, catalyzes the complicated ring closure reaction between the two acyclic compounds 1-deoxy-D-xylulose-5-phosphate (DXP) and 3-amino-2-oxopropyl phosphate (1-amino-acetone-3-phosphate or AAP) to form pyridoxine 5'-phosphate (PNP) and inorganic phosphate. This is Pyridoxine 5'-phosphate synthase from Geotalea daltonii (strain DSM 22248 / JCM 15807 / FRC-32) (Geobacter daltonii).